Here is a 157-residue protein sequence, read N- to C-terminus: Large ribosomal subunit protein bL17 (157 aa).

The disordered stretch occupies residues A124–E157.

It belongs to the bacterial ribosomal protein bL17 family. In terms of assembly, part of the 50S ribosomal subunit. Contacts protein L32.

The sequence is that of Large ribosomal subunit protein bL17 from Chlorobaculum tepidum (strain ATCC 49652 / DSM 12025 / NBRC 103806 / TLS) (Chlorobium tepidum).